A 282-amino-acid polypeptide reads, in one-letter code: Phosphatidylserine decarboxylase proenzyme (282 aa).

Residues Asp88, His144, and Ser247 each act as charge relay system; for autoendoproteolytic cleavage activity in the active site. The active-site Schiff-base intermediate with substrate; via pyruvic acid; for decarboxylase activity is Ser247. At Ser247 the chain carries Pyruvic acid (Ser); by autocatalysis.

The protein belongs to the phosphatidylserine decarboxylase family. PSD-B subfamily. Prokaryotic type I sub-subfamily. As to quaternary structure, heterodimer of a large membrane-associated beta subunit and a small pyruvoyl-containing alpha subunit. The cofactor is pyruvate. Is synthesized initially as an inactive proenzyme. Formation of the active enzyme involves a self-maturation process in which the active site pyruvoyl group is generated from an internal serine residue via an autocatalytic post-translational modification. Two non-identical subunits are generated from the proenzyme in this reaction, and the pyruvate is formed at the N-terminus of the alpha chain, which is derived from the carboxyl end of the proenzyme. The autoendoproteolytic cleavage occurs by a canonical serine protease mechanism, in which the side chain hydroxyl group of the serine supplies its oxygen atom to form the C-terminus of the beta chain, while the remainder of the serine residue undergoes an oxidative deamination to produce ammonia and the pyruvoyl prosthetic group on the alpha chain. During this reaction, the Ser that is part of the protease active site of the proenzyme becomes the pyruvoyl prosthetic group, which constitutes an essential element of the active site of the mature decarboxylase.

It localises to the cell membrane. It catalyses the reaction a 1,2-diacyl-sn-glycero-3-phospho-L-serine + H(+) = a 1,2-diacyl-sn-glycero-3-phosphoethanolamine + CO2. It participates in phospholipid metabolism; phosphatidylethanolamine biosynthesis; phosphatidylethanolamine from CDP-diacylglycerol: step 2/2. Functionally, catalyzes the formation of phosphatidylethanolamine (PtdEtn) from phosphatidylserine (PtdSer). The polypeptide is Phosphatidylserine decarboxylase proenzyme (Xanthomonas campestris pv. campestris (strain B100)).